The primary structure comprises 231 residues: Eukaryotic translation initiation factor 4E allele A (231 aa).

Positions 1 to 20 are enriched in basic and acidic residues; it reads MAAAEMERTTSFDAAEKLKA. Residues 1–36 form a disordered region; it reads MAAAEMERTTSFDAAEKLKAADAGGGEVDDELEEGE. Residues 27-36 show a composition bias toward acidic residues; it reads EVDDELEEGE. EIF4G-binding stretches follow at residues 56–59 and 66–102; these read HPLE and FDSP…NNIH. MRNA contacts are provided by residues 74-79, Lys106, and 124-125; these read RQTAWG and WE. A disulfide bridge connects residues Cys129 and Cys167. The tract at residues 150 to 159 is EIF4G-binding; that stretch reads YTLLAMIGHQ. MRNA-binding positions include 174–179 and 219–223; these read RSKGEK and KRLDR.

Belongs to the eukaryotic initiation factor 4E family. As to quaternary structure, EIF4F is a multi-subunit complex, the composition of which varies with external and internal environmental conditions. It is composed of at least EIF4A, EIF4E and EIF4G. EIF4E is also known to interact with other partners. In higher plants two isoforms of EIF4F have been identified, named isoform EIF4F and isoform EIF(iso)4F. Isoform EIF4F has subunits p220 and p26, whereas isoform EIF(iso)4F has subunits p82 and p28. (Microbial infection) Interacts with viral genome-linked protein (VPg); this interaction is possible in susceptible hosts but impaired in resistant plants. In terms of processing, according to the redox status, the Cys-129-Cys-167 disulfide bridge may have a role in regulating protein function by affecting its ability to bind capped mRNA.

The protein localises to the nucleus. It is found in the cytoplasm. Functionally, component of the protein complex eIF4F, which is involved in the recognition of the mRNA cap, ATP-dependent unwinding of 5'-terminal secondary structure and recruitment of mRNA to the ribosome. Recognizes and binds the 7-methylguanosine-containing mRNA cap during an early step in the initiation of protein synthesis and facilitates ribosome binding by inducing the unwinding of the mRNAs secondary structures. Key component of recessive resistance to potyviruses. In terms of biological role, (Microbial infection) Susceptibility host factor required for viral infection (e.g. Potato virus Y (PVY)) by recruiting viral RNAs to the host ribosomal complex via an interaction with viral genome-linked protein (VPg). This chain is Eukaryotic translation initiation factor 4E allele A, found in Solanum tuberosum (Potato).